The following is a 275-amino-acid chain: Rhamnulose-1-phosphate aldolase (275 aa).

Glutamate 117 is a catalytic residue. Residues histidine 141, histidine 143, and histidine 212 each contribute to the Zn(2+) site.

This sequence belongs to the aldolase class II family. RhaD subfamily. As to quaternary structure, homotetramer. Requires Zn(2+) as cofactor.

Its subcellular location is the cytoplasm. The enzyme catalyses L-rhamnulose 1-phosphate = (S)-lactaldehyde + dihydroxyacetone phosphate. It participates in carbohydrate degradation; L-rhamnose degradation; glycerone phosphate from L-rhamnose: step 3/3. Its function is as follows. Catalyzes the reversible cleavage of L-rhamnulose-1-phosphate to dihydroxyacetone phosphate (DHAP) and L-lactaldehyde. The protein is Rhamnulose-1-phosphate aldolase of Salmonella paratyphi B (strain ATCC BAA-1250 / SPB7).